Here is an 89-residue protein sequence, read N- to C-terminus: MSLNAETKAAIVAEYAQCENDTGSPEVQVALLTASINHLQGHFANHKHDHHSRRGLLRMVSSRRKLLDYLKGKNSTRYQDLIKRLGLRR.

Belongs to the universal ribosomal protein uS15 family. In terms of assembly, part of the 30S ribosomal subunit. Forms a bridge to the 50S subunit in the 70S ribosome, contacting the 23S rRNA.

In terms of biological role, one of the primary rRNA binding proteins, it binds directly to 16S rRNA where it helps nucleate assembly of the platform of the 30S subunit by binding and bridging several RNA helices of the 16S rRNA. Its function is as follows. Forms an intersubunit bridge (bridge B4) with the 23S rRNA of the 50S subunit in the ribosome. The polypeptide is Small ribosomal subunit protein uS15 (Aliivibrio salmonicida (strain LFI1238) (Vibrio salmonicida (strain LFI1238))).